The chain runs to 525 residues: Peptide chain release factor 3 (525 aa).

The tr-type G domain maps to 11–279 (DKRRTFAIIS…TYLEYAPQPA (269 aa)). Residues 20–27 (SHPDAGKT), 88–92 (DTPGH), and 142–145 (NKLD) each bind GTP.

The protein belongs to the TRAFAC class translation factor GTPase superfamily. Classic translation factor GTPase family. PrfC subfamily.

The protein resides in the cytoplasm. Increases the formation of ribosomal termination complexes and stimulates activities of RF-1 and RF-2. It binds guanine nucleotides and has strong preference for UGA stop codons. It may interact directly with the ribosome. The stimulation of RF-1 and RF-2 is significantly reduced by GTP and GDP, but not by GMP. The polypeptide is Peptide chain release factor 3 (Levilactobacillus brevis (strain ATCC 367 / BCRC 12310 / CIP 105137 / JCM 1170 / LMG 11437 / NCIMB 947 / NCTC 947) (Lactobacillus brevis)).